The chain runs to 408 residues: Arginine biosynthesis bifunctional protein ArgJ (408 aa).

Positions 162, 188, 199, 280, 403, and 408 each coordinate substrate. Thr199 serves as the catalytic Nucleophile.

This sequence belongs to the ArgJ family. In terms of assembly, heterotetramer of two alpha and two beta chains.

The protein resides in the cytoplasm. The catalysed reaction is N(2)-acetyl-L-ornithine + L-glutamate = N-acetyl-L-glutamate + L-ornithine. It catalyses the reaction L-glutamate + acetyl-CoA = N-acetyl-L-glutamate + CoA + H(+). It functions in the pathway amino-acid biosynthesis; L-arginine biosynthesis; L-ornithine and N-acetyl-L-glutamate from L-glutamate and N(2)-acetyl-L-ornithine (cyclic): step 1/1. Its pathway is amino-acid biosynthesis; L-arginine biosynthesis; N(2)-acetyl-L-ornithine from L-glutamate: step 1/4. Functionally, catalyzes two activities which are involved in the cyclic version of arginine biosynthesis: the synthesis of N-acetylglutamate from glutamate and acetyl-CoA as the acetyl donor, and of ornithine by transacetylation between N(2)-acetylornithine and glutamate. This is Arginine biosynthesis bifunctional protein ArgJ from Ruegeria pomeroyi (strain ATCC 700808 / DSM 15171 / DSS-3) (Silicibacter pomeroyi).